We begin with the raw amino-acid sequence, 420 residues long: Proteasome-activating nucleotidase (420 aa).

The tract at residues 1 to 25 (MRSHLVKPGSVYDGIEPGELGETTE) is disordered. Residues 22 to 79 (ETTESVQDRVRQLESRNSFLEEQCSQIESEKRYLENQKIKYEREIRKLQSELDRMKTS) adopt a coiled-coil conformation. Residues 203–208 (GTGKTL) and H342 contribute to the ATP site. The segment at 418–420 (MFV) is docks into pockets in the proteasome alpha-ring to cause gate opening.

Belongs to the AAA ATPase family. As to quaternary structure, homohexamer. The hexameric complex has a two-ring architecture resembling a top hat that caps the 20S proteasome core at one or both ends. Upon ATP-binding, the C-terminus of PAN interacts with the alpha-rings of the proteasome core by binding to the intersubunit pockets.

The protein localises to the cytoplasm. In terms of biological role, ATPase which is responsible for recognizing, binding, unfolding and translocation of substrate proteins into the archaeal 20S proteasome core particle. Is essential for opening the gate of the 20S proteasome via an interaction with its C-terminus, thereby allowing substrate entry and access to the site of proteolysis. Thus, the C-termini of the proteasomal ATPase function like a 'key in a lock' to induce gate opening and therefore regulate proteolysis. Unfolding activity requires energy from ATP hydrolysis, whereas ATP binding alone promotes ATPase-20S proteasome association which triggers gate opening, and supports translocation of unfolded substrates. The chain is Proteasome-activating nucleotidase from Methanosarcina mazei (strain ATCC BAA-159 / DSM 3647 / Goe1 / Go1 / JCM 11833 / OCM 88) (Methanosarcina frisia).